A 255-amino-acid polypeptide reads, in one-letter code: 4-hydroxy-tetrahydrodipicolinate reductase (255 aa).

Residues 13-18, 90-92, and 114-117 each bind NAD(+); these read GCNGKM, CTT, and SANM. The active-site Proton donor/acceptor is His-147. A (S)-2,3,4,5-tetrahydrodipicolinate-binding site is contributed by His-148. Lys-151 (proton donor) is an active-site residue. (S)-2,3,4,5-tetrahydrodipicolinate is bound at residue 157–158; that stretch reads GT.

The protein belongs to the DapB family.

The protein localises to the cytoplasm. The catalysed reaction is (S)-2,3,4,5-tetrahydrodipicolinate + NAD(+) + H2O = (2S,4S)-4-hydroxy-2,3,4,5-tetrahydrodipicolinate + NADH + H(+). It carries out the reaction (S)-2,3,4,5-tetrahydrodipicolinate + NADP(+) + H2O = (2S,4S)-4-hydroxy-2,3,4,5-tetrahydrodipicolinate + NADPH + H(+). Its pathway is amino-acid biosynthesis; L-lysine biosynthesis via DAP pathway; (S)-tetrahydrodipicolinate from L-aspartate: step 4/4. Its function is as follows. Catalyzes the conversion of 4-hydroxy-tetrahydrodipicolinate (HTPA) to tetrahydrodipicolinate. This is 4-hydroxy-tetrahydrodipicolinate reductase from Clostridium tetani (strain Massachusetts / E88).